We begin with the raw amino-acid sequence, 271 residues long: Hydroxyethylthiazole kinase (271 aa).

Met-50 provides a ligand contact to substrate. ATP-binding residues include Arg-126 and Thr-172. Gly-199 is a substrate binding site.

This sequence belongs to the Thz kinase family. Requires Mg(2+) as cofactor.

It carries out the reaction 5-(2-hydroxyethyl)-4-methylthiazole + ATP = 4-methyl-5-(2-phosphooxyethyl)-thiazole + ADP + H(+). It participates in cofactor biosynthesis; thiamine diphosphate biosynthesis; 4-methyl-5-(2-phosphoethyl)-thiazole from 5-(2-hydroxyethyl)-4-methylthiazole: step 1/1. Its function is as follows. Catalyzes the phosphorylation of the hydroxyl group of 4-methyl-5-beta-hydroxyethylthiazole (THZ). The sequence is that of Hydroxyethylthiazole kinase from Akkermansia muciniphila (strain ATCC BAA-835 / DSM 22959 / JCM 33894 / BCRC 81048 / CCUG 64013 / CIP 107961 / Muc).